A 22-amino-acid polypeptide reads, in one-letter code: Cysteine-rich venom protein collettin-a (22 aa).

The segment covering 1–15 (SNKKNYQKEIVDKHN) has biased composition (basic and acidic residues). The disordered stretch occupies residues 1-22 (SNKKNYQKEIVDKHNALRRSVK).

The protein belongs to the CRISP family. Post-translationally, contains 8 disulfide bonds. In terms of tissue distribution, expressed by the venom gland.

The protein localises to the secreted. In Pseudechis colletti (Collett's snake), this protein is Cysteine-rich venom protein collettin-a.